The following is a 197-amino-acid chain: MYB-like transcription factor EOBII (197 aa).

HTH myb-type domains follow at residues 10-62 (DAEV…LNYL) and 63-117 (RPDV…QKHI). 2 DNA-binding regions (H-T-H motif) span residues 38–62 (WNSL…LNYL) and 90–113 (WSKI…RTRI). The interval 125–158 (GQAASSEQNDHQEACTSQMSNGPNDNTIDQTYSP) is disordered. Over residues 138 to 158 (ACTSQMSNGPNDNTIDQTYSP) the composition is skewed to polar residues.

As to expression, specifically expressed in flowers, mostly in stigmas, petal tubes and petal limbs, and, to a lower extent, in anthers and stamen. Also present at low levels in roots, stems, leaves and sepals.

The protein localises to the nucleus. In terms of biological role, MYB-type transcription factor controlling the production of volatile organic compounds (VOCs), including floral volatile benzenoids and phenylpropanoids (FVBP), in flowers of fragrant cultivars (e.g. cv. Mitchell and cv. V26) by regulating the expression of ODO1 and EOBI, key regulators of the shikimate pathway, and of several biosynthetic floral scent-related genes including IGS, PAL2 and CFAT. This scent, mostly produced in the evening and night by the petals, attracts the pollinators (e.g. the night-active hawkmoth pollinator Manduca sexta). Binds to and activates the ODO1 and EOBI promoters via MYB binding sites (MBS) 5'-AAACCTAAT-3' and 5'-CTAACT-3'. Regulates the promoters of IGS1, CFAT and PAL2. Controls flowers petal opening by modulating a global transcriptomic switch. In Petunia hybrida (Petunia), this protein is MYB-like transcription factor EOBII.